The following is a 518-amino-acid chain: Metalloprotease TIKI2 (518 aa).

The signal sequence occupies residues 1-22; that stretch reads MNCQSGLRWLVTLCAFFQVGSA. Topologically, residues 23-499 are extracellular; sequence RDTHESTRQC…SALDSAAPNP (477 aa). N224, N233, N282, N325, and N340 each carry an N-linked (GlcNAc...) asparagine glycan. A helical transmembrane segment spans residues 500 to 517; that stretch reads TYALTCFLACLISQLLFA. Residue S518 is a topological domain, cytoplasmic.

The protein belongs to the TIKI family. Mn(2+) serves as cofactor. Co(2+) is required as a cofactor.

Its subcellular location is the cell membrane. Functionally, metalloprotease that acts as a negative regulator of the Wnt signaling pathway by mediating the cleavage of the N-terminal residues of a subset of Wnt proteins. Following cleavage, Wnt proteins become oxidized and form large disulfide-bond oligomers, leading to their inactivation. This Danio rerio (Zebrafish) protein is Metalloprotease TIKI2 (trabd2b).